The following is a 493-amino-acid chain: Cytochrome P450 2E1 (493 aa).

Residue 298–303 (FAGTET) coordinates substrate. C437 lines the heme pocket.

Belongs to the cytochrome P450 family. Interacts with chaperones HSP70 and HSP90; this interaction is required for initial targeting to mitochondria. Requires heme as cofactor.

The protein resides in the endoplasmic reticulum membrane. It localises to the microsome membrane. Its subcellular location is the mitochondrion inner membrane. The enzyme catalyses an organic molecule + reduced [NADPH--hemoprotein reductase] + O2 = an alcohol + oxidized [NADPH--hemoprotein reductase] + H2O + H(+). It carries out the reaction (5Z,8Z,11Z)-eicosatrienoate + reduced [NADPH--hemoprotein reductase] + O2 = 19-hydroxy-(5Z,8Z,11Z)-eicosatrienoate + oxidized [NADPH--hemoprotein reductase] + H2O + H(+). It catalyses the reaction (5Z,8Z,11Z,14Z,17Z)-eicosapentaenoate + reduced [NADPH--hemoprotein reductase] + O2 = 19-hydroxy-(5Z,8Z,11Z,14Z,17Z)-eicosapentaenoate + oxidized [NADPH--hemoprotein reductase] + H2O + H(+). The catalysed reaction is (4Z,7Z,10Z,13Z,16Z,19Z)-docosahexaenoate + reduced [NADPH--hemoprotein reductase] + O2 = 21-hydroxy-(4Z,7Z,10Z,13Z,16Z,19Z)-docosahexaenoate + oxidized [NADPH--hemoprotein reductase] + H2O + H(+). The enzyme catalyses dodecanoate + reduced [NADPH--hemoprotein reductase] + O2 = 11-hydroxydodecanoate + oxidized [NADPH--hemoprotein reductase] + H2O + H(+). It carries out the reaction tetradecanoate + reduced [NADPH--hemoprotein reductase] + O2 = 13-hydroxytetradecanoate + oxidized [NADPH--hemoprotein reductase] + H2O + H(+). It catalyses the reaction 4-nitrophenol + NADPH + O2 + H(+) = 4-nitrocatechol + NADP(+) + H2O. It functions in the pathway lipid metabolism; fatty acid metabolism. Its activity is regulated as follows. The omega-1 hydroxylase activity is stimulated by cytochrome b5. In terms of biological role, a cytochrome P450 monooxygenase involved in the metabolism of fatty acids. Mechanistically, uses molecular oxygen inserting one oxygen atom into a substrate, and reducing the second into a water molecule, with two electrons provided by NADPH via cytochrome P450 reductase (NADPH--hemoprotein reductase). Catalyzes the hydroxylation of carbon-hydrogen bonds. Hydroxylates fatty acids specifically at the omega-1 position displaying the highest catalytic activity for saturated fatty acids. May be involved in the oxidative metabolism of xenobiotics. The chain is Cytochrome P450 2E1 (CYP2E1) from Oryctolagus cuniculus (Rabbit).